Consider the following 238-residue polypeptide: MGRKWANIVAKKTAKDGATSKIYAKFGVEIYVAAKQGEPDPELNTALKFVIDRAKQAQVPKHVIDKAIDKAKGNTDETFVEGRYEGFGPNGSMIIVDTLTSNVNRTAANVRTAYGKNGGNMGASGSVSYLFDKKGVIVFAGDDADSVFEQLLEADVDVDDVEAEEGTITVYTAPTDLHKGIQALRDNGVEEFQVTELEMIPQSEVVLEGDDLETFEKLIDALESDDDVQKVYHNVADF.

It belongs to the TACO1 family. YeeN subfamily.

The protein localises to the cytoplasm. This Streptococcus pyogenes serotype M4 (strain MGAS10750) protein is Probable transcriptional regulatory protein MGAS10750_Spy0264.